Reading from the N-terminus, the 95-residue chain is Large ribosomal subunit protein uL23 (95 aa).

It belongs to the universal ribosomal protein uL23 family. Part of the 50S ribosomal subunit. Contacts protein L29, and trigger factor when it is bound to the ribosome.

Its function is as follows. One of the early assembly proteins it binds 23S rRNA. One of the proteins that surrounds the polypeptide exit tunnel on the outside of the ribosome. Forms the main docking site for trigger factor binding to the ribosome. The protein is Large ribosomal subunit protein uL23 of Thermodesulfovibrio yellowstonii (strain ATCC 51303 / DSM 11347 / YP87).